We begin with the raw amino-acid sequence, 290 residues long: Dehydrodolichyl diphosphate synthase CPT3 (290 aa).

Residue D42 is part of the active site.

Belongs to the UPP synthase family. Mg(2+) serves as cofactor. As to expression, expressed in leaf trichomes and stem trichomes. Expressed at low levels in young leaves, stems and old leaves.

It localises to the cytoplasm. The protein localises to the cytosol. It catalyses the reaction n isopentenyl diphosphate + (2E,6E)-farnesyl diphosphate = a di-trans,poly-cis-polyprenyl diphosphate + n diphosphate. In terms of biological role, catalyzes cis-prenyl chain elongation to produce the polyprenyl backbone of dolichol, a glycosyl carrier-lipid required for the biosynthesis of several classes of glycoprotein. In Solanum lycopersicum (Tomato), this protein is Dehydrodolichyl diphosphate synthase CPT3.